The primary structure comprises 215 residues: Methylthioribulose-1-phosphate dehydratase (215 aa).

Residues H103 and H105 each contribute to the Zn(2+) site.

This sequence belongs to the aldolase class II family. MtnB subfamily. The cofactor is Zn(2+).

The catalysed reaction is 5-(methylsulfanyl)-D-ribulose 1-phosphate = 5-methylsulfanyl-2,3-dioxopentyl phosphate + H2O. The protein operates within amino-acid biosynthesis; L-methionine biosynthesis via salvage pathway; L-methionine from S-methyl-5-thio-alpha-D-ribose 1-phosphate: step 2/6. Functionally, catalyzes the dehydration of methylthioribulose-1-phosphate (MTRu-1-P) into 2,3-diketo-5-methylthiopentyl-1-phosphate (DK-MTP-1-P). The chain is Methylthioribulose-1-phosphate dehydratase from Persephonella marina (strain DSM 14350 / EX-H1).